Consider the following 492-residue polypeptide: MKINLLTFGVSTLVERNIGYITQIIGPVLDAAFPPGKMPNIYNSLIVKGQNPAGQQINVTCEVQQLLGNNKVRAIAMSATDGLTRGMEVIDTGAPLSVPVGQATLGRIFNVLGEPVDNLGPINADKKSSIHEPAPAFTQLDTKLSIFETGIKVVDLLAPYRRGGKIGLFGGAGVGKTVLIMELINNIAKAHGGVSVFGGVGERTREGNDLYTEMKESKVINEQNLSESKVALVYGQMNEPPGARMRVGLTALTIAEYFRDVNKQDVLLFIDNIFRFVQAGSEVSALLGRMPSAVGYQPTLSTEMGSLQERITSTKEGSITSIQAVYVPADDLTDPAPATTFAHLDATTVLSRGLAAKGIYPAVDPLDSTSTMLQPWIVGEEHYETAQGVKQTLQRYKELQDIIAILGLDELSEEDRLTVARARKIERFLSQPFFVAEVFTGSPGKYVSLAETIKGFQMILSGELDSLPEQAFYLVGNIEEATAKAGISQMED.

Position 170–177 (170–177 (GGAGVGKT)) interacts with ATP.

The protein belongs to the ATPase alpha/beta chains family. As to quaternary structure, F-type ATPases have 2 components, CF(1) - the catalytic core - and CF(0) - the membrane proton channel. CF(1) has five subunits: alpha(3), beta(3), gamma(1), delta(1), epsilon(1). CF(0) has four main subunits: a(1), b(1), b'(1) and c(9-12).

It is found in the plastid. It localises to the chloroplast thylakoid membrane. The enzyme catalyses ATP + H2O + 4 H(+)(in) = ADP + phosphate + 5 H(+)(out). In terms of biological role, produces ATP from ADP in the presence of a proton gradient across the membrane. The catalytic sites are hosted primarily by the beta subunits. The sequence is that of ATP synthase subunit beta, chloroplastic from Psilotum nudum (Whisk fern).